Here is a 205-residue protein sequence, read N- to C-terminus: Ribosomal RNA small subunit methyltransferase G (205 aa).

Residues glycine 66, phenylalanine 71, 119–120, and arginine 135 each bind S-adenosyl-L-methionine; that span reads IE.

The protein belongs to the methyltransferase superfamily. RNA methyltransferase RsmG family.

Its subcellular location is the cytoplasm. The enzyme catalyses guanosine(527) in 16S rRNA + S-adenosyl-L-methionine = N(7)-methylguanosine(527) in 16S rRNA + S-adenosyl-L-homocysteine. In terms of biological role, specifically methylates the N7 position of guanine in position 527 of 16S rRNA. This is Ribosomal RNA small subunit methyltransferase G from Rhizobium etli (strain ATCC 51251 / DSM 11541 / JCM 21823 / NBRC 15573 / CFN 42).